The primary structure comprises 241 residues: Protein-L-isoaspartate O-methyltransferase (241 aa).

The active site involves serine 69.

This sequence belongs to the methyltransferase superfamily. L-isoaspartyl/D-aspartyl protein methyltransferase family.

The protein localises to the cytoplasm. It catalyses the reaction [protein]-L-isoaspartate + S-adenosyl-L-methionine = [protein]-L-isoaspartate alpha-methyl ester + S-adenosyl-L-homocysteine. Its function is as follows. Catalyzes the methyl esterification of L-isoaspartyl residues in peptides and proteins that result from spontaneous decomposition of normal L-aspartyl and L-asparaginyl residues. It plays a role in the repair and/or degradation of damaged proteins. This chain is Protein-L-isoaspartate O-methyltransferase, found in Hyperthermus butylicus (strain DSM 5456 / JCM 9403 / PLM1-5).